We begin with the raw amino-acid sequence, 350 residues long: S-adenosylmethionine:tRNA ribosyltransferase-isomerase (350 aa).

Belongs to the QueA family. In terms of assembly, monomer.

It localises to the cytoplasm. The catalysed reaction is 7-aminomethyl-7-carbaguanosine(34) in tRNA + S-adenosyl-L-methionine = epoxyqueuosine(34) in tRNA + adenine + L-methionine + 2 H(+). It functions in the pathway tRNA modification; tRNA-queuosine biosynthesis. Functionally, transfers and isomerizes the ribose moiety from AdoMet to the 7-aminomethyl group of 7-deazaguanine (preQ1-tRNA) to give epoxyqueuosine (oQ-tRNA). The polypeptide is S-adenosylmethionine:tRNA ribosyltransferase-isomerase (Vibrio vulnificus (strain CMCP6)).